Here is a 333-residue protein sequence, read N- to C-terminus: NAC domain-containing protein 26 (333 aa).

The NAC domain maps to 14–173; it reads LPPGFRFHPT…DWAVCRIFHK (160 aa). Residues 114–179 mediate DNA binding; that stretch reads IGMKKTLVFY…IFHKSSGIKK (66 aa). The tract at residues 143 to 162 is disordered; that stretch reads ADASPPQPPPPPSSAEPPRQ. The span at 147–157 shows a compositional bias: pro residues; sequence PPQPPPPPSSA.

In terms of assembly, forms homodimers. Forms heterodimers with NAC20. Forms heterodimers with NAC23. As to expression, expressed in developing seeds.

It is found in the nucleus. Functionally, transcription factor that acts redundantly with NAC20 to regulate the expression of genes involved in the biosynthesis of starch and storage proteins in grain. Directly binds to the promoters of starch synthase 1 (SS1), pullulanase (PUL), glutelin A1 (GLUA1), glutelins B4 and B5 (GLUB4 and GLUB5), alpha-globulin and 16 kDa prolamin, and activates their expression. Possesses transactivation activity in yeast. The sequence is that of NAC domain-containing protein 26 from Oryza sativa subsp. indica (Rice).